The primary structure comprises 111 residues: Resistin-like beta (111 aa).

Residues 1 to 23 form the signal peptide; it reads MGPSSCLLLILIPLLQLINPGST. 5 cysteine pairs are disulfide-bonded: Cys55–Cys108, Cys67–Cys107, Cys76–Cys93, Cys78–Cys95, and Cys82–Cys97.

It belongs to the resistin/FIZZ family. Homodimer; disulfide-linked. Expressed only in the gastrointestinal tract, particularly the colon.

It is found in the secreted. Functionally, probable hormone. This Homo sapiens (Human) protein is Resistin-like beta (RETNLB).